The sequence spans 465 residues: Uronate isomerase (465 aa).

It belongs to the metallo-dependent hydrolases superfamily. Uronate isomerase family.

It carries out the reaction D-glucuronate = D-fructuronate. The enzyme catalyses aldehydo-D-galacturonate = keto-D-tagaturonate. It functions in the pathway carbohydrate metabolism; pentose and glucuronate interconversion. This Streptococcus equi subsp. equi (strain 4047) protein is Uronate isomerase.